Reading from the N-terminus, the 453-residue chain is C4-dicarboxylate TRAP transporter large permease protein DctM (453 aa).

13 consecutive transmembrane segments (helical) span residues 2-22 (AVAL…PIAI), 50-70 (AFAG…STFM), 82-102 (FAIA…VVAC), 104-124 (MFAA…SIVI), 139-159 (GVIC…VMVV), 172-192 (FLGG…AIYI), 217-237 (ASWG…GIFT), 243-263 (AVAA…MGPF), 289-309 (LYDA…ALIL), 326-346 (MLSA…ILLV), 356-376 (LLVI…IDPI), 380-400 (IMMV…LNLF), and 417-437 (ALPW…VPWV).

Belongs to the TRAP transporter large permease family. As to quaternary structure, the complex comprises the extracytoplasmic solute receptor protein DctP, and the two transmembrane proteins DctQ and DctM.

The protein resides in the cell inner membrane. Part of the tripartite ATP-independent periplasmic (TRAP) transport system DctPQM involved in C4-dicarboxylates uptake. This chain is C4-dicarboxylate TRAP transporter large permease protein DctM, found in Vibrio cholerae serotype O1 (strain ATCC 39315 / El Tor Inaba N16961).